The sequence spans 358 residues: DNA polymerase IV (358 aa).

In terms of domain architecture, UmuC spans 4-185 (IIHVDMDCFY…LPLIKIPGVG (182 aa)). Mg(2+) is bound by residues aspartate 8 and aspartate 103. Glutamate 104 is an active-site residue.

It belongs to the DNA polymerase type-Y family. As to quaternary structure, monomer. Requires Mg(2+) as cofactor.

The protein resides in the cytoplasm. It carries out the reaction DNA(n) + a 2'-deoxyribonucleoside 5'-triphosphate = DNA(n+1) + diphosphate. Its function is as follows. Poorly processive, error-prone DNA polymerase involved in untargeted mutagenesis. Copies undamaged DNA at stalled replication forks, which arise in vivo from mismatched or misaligned primer ends. These misaligned primers can be extended by PolIV. Exhibits no 3'-5' exonuclease (proofreading) activity. May be involved in translesional synthesis, in conjunction with the beta clamp from PolIII. The polypeptide is DNA polymerase IV (Shewanella halifaxensis (strain HAW-EB4)).